We begin with the raw amino-acid sequence, 418 residues long: Phosphoglycerate kinase (418 aa).

Substrate is bound by residues 18–20, Arg-34, 57–60, Arg-115, and Arg-171; these read DFN and HLGR. ATP is bound by residues Lys-224, Gly-315, Glu-346, and 375–378; that span reads GGDS.

This sequence belongs to the phosphoglycerate kinase family. In terms of assembly, monomer.

The protein resides in the cytoplasm. It catalyses the reaction (2R)-3-phosphoglycerate + ATP = (2R)-3-phospho-glyceroyl phosphate + ADP. The protein operates within carbohydrate degradation; glycolysis; pyruvate from D-glyceraldehyde 3-phosphate: step 2/5. This chain is Phosphoglycerate kinase, found in Porphyromonas gingivalis (strain ATCC BAA-308 / W83).